The sequence spans 276 residues: NH(3)-dependent NAD(+) synthetase (276 aa).

ATP is bound at residue 43 to 50; the sequence is GISGGVDS. Aspartate 49 contributes to the Mg(2+) binding site. Deamido-NAD(+) is bound at residue arginine 146. Threonine 166 contacts ATP. Glutamate 171 lines the Mg(2+) pocket. The deamido-NAD(+) site is built by lysine 179 and aspartate 186. ATP is bound by residues lysine 195 and threonine 217. 266–267 is a deamido-NAD(+) binding site; that stretch reads HK.

It belongs to the NAD synthetase family. As to quaternary structure, homodimer.

It catalyses the reaction deamido-NAD(+) + NH4(+) + ATP = AMP + diphosphate + NAD(+) + H(+). It functions in the pathway cofactor biosynthesis; NAD(+) biosynthesis; NAD(+) from deamido-NAD(+) (ammonia route): step 1/1. Catalyzes the ATP-dependent amidation of deamido-NAD to form NAD. Uses ammonia as a nitrogen source. The sequence is that of NH(3)-dependent NAD(+) synthetase from Aliivibrio salmonicida (strain LFI1238) (Vibrio salmonicida (strain LFI1238)).